Consider the following 581-residue polypeptide: Proline--tRNA ligase (581 aa).

The protein belongs to the class-II aminoacyl-tRNA synthetase family. ProS type 1 subfamily. As to quaternary structure, homodimer.

The protein resides in the cytoplasm. It carries out the reaction tRNA(Pro) + L-proline + ATP = L-prolyl-tRNA(Pro) + AMP + diphosphate. Catalyzes the attachment of proline to tRNA(Pro) in a two-step reaction: proline is first activated by ATP to form Pro-AMP and then transferred to the acceptor end of tRNA(Pro). As ProRS can inadvertently accommodate and process non-cognate amino acids such as alanine and cysteine, to avoid such errors it has two additional distinct editing activities against alanine. One activity is designated as 'pretransfer' editing and involves the tRNA(Pro)-independent hydrolysis of activated Ala-AMP. The other activity is designated 'posttransfer' editing and involves deacylation of mischarged Ala-tRNA(Pro). The misacylated Cys-tRNA(Pro) is not edited by ProRS. The protein is Proline--tRNA ligase of Variovorax paradoxus (strain S110).